Consider the following 254-residue polypeptide: Dihydroorotate dehydrogenase B (NAD(+)), electron transfer subunit (254 aa).

One can recognise an FAD-binding FR-type domain in the interval 1-99 (MLQTEMKVIQ…LGPLGKGFDI (99 aa)). FAD is bound by residues 50–53 (RPIS), 67–69 (LYR), and 74–75 (GT). 4 residues coordinate [2Fe-2S] cluster: C218, C223, C226, and C241.

The protein belongs to the PyrK family. Heterotetramer of 2 PyrK and 2 PyrD type B subunits. [2Fe-2S] cluster is required as a cofactor. It depends on FAD as a cofactor.

It participates in pyrimidine metabolism; UMP biosynthesis via de novo pathway; orotate from (S)-dihydroorotate (NAD(+) route): step 1/1. Its function is as follows. Responsible for channeling the electrons from the oxidation of dihydroorotate from the FMN redox center in the PyrD type B subunit to the ultimate electron acceptor NAD(+). The protein is Dihydroorotate dehydrogenase B (NAD(+)), electron transfer subunit of Listeria monocytogenes serovar 1/2a (strain ATCC BAA-679 / EGD-e).